Consider the following 367-residue polypeptide: 2-aminoethylphosphonate--pyruvate transaminase (367 aa).

The residue at position 193 (Lys-193) is an N6-(pyridoxal phosphate)lysine.

The protein belongs to the class-V pyridoxal-phosphate-dependent aminotransferase family. PhnW subfamily. As to quaternary structure, homodimer. It depends on pyridoxal 5'-phosphate as a cofactor.

It catalyses the reaction (2-aminoethyl)phosphonate + pyruvate = phosphonoacetaldehyde + L-alanine. Involved in phosphonate degradation. The protein is 2-aminoethylphosphonate--pyruvate transaminase of Vibrio vulnificus (strain YJ016).